A 247-amino-acid polypeptide reads, in one-letter code: NAD(P)H-quinone oxidoreductase subunit K, chloroplastic (247 aa).

Cys-64, Cys-65, Cys-129, and Cys-160 together coordinate [4Fe-4S] cluster.

This sequence belongs to the complex I 20 kDa subunit family. As to quaternary structure, NDH is composed of at least 16 different subunits, 5 of which are encoded in the nucleus. Requires [4Fe-4S] cluster as cofactor.

It is found in the plastid. Its subcellular location is the chloroplast thylakoid membrane. The catalysed reaction is a plastoquinone + NADH + (n+1) H(+)(in) = a plastoquinol + NAD(+) + n H(+)(out). It carries out the reaction a plastoquinone + NADPH + (n+1) H(+)(in) = a plastoquinol + NADP(+) + n H(+)(out). In terms of biological role, NDH shuttles electrons from NAD(P)H:plastoquinone, via FMN and iron-sulfur (Fe-S) centers, to quinones in the photosynthetic chain and possibly in a chloroplast respiratory chain. The immediate electron acceptor for the enzyme in this species is believed to be plastoquinone. Couples the redox reaction to proton translocation, and thus conserves the redox energy in a proton gradient. The protein is NAD(P)H-quinone oxidoreductase subunit K, chloroplastic of Mesostigma viride (Green alga).